The following is a 463-amino-acid chain: Histone acetyltransferase mst1 (463 aa).

One can recognise a Tudor-knot domain in the interval 22 to 74 (VYKSKVFAFKDGEYRKAEILMIQKRTRGVVYYVHYNDYNKRLDEWITIDNIDL). A disordered region spans residues 76 to 145 (KGIEYPPPEK…GSNAGNESLP (70 aa)). Residues 87-99 (KKAHGKGKSSKRP) show a composition bias toward basic residues. Low complexity predominate over residues 111–121 (PSKTEPSTPST). An MYST-type HAT domain is found at 179-451 (ARIRNINKIC…NGDLLADWQP (273 aa)). Residues 212 to 237 (VYICSFCFCYYGSERQFQRHREKCTL) form a C2HC MYST-type zinc finger. The short motif at 262-283 (RTWCRNICLLSKLFLDHKMLYY) is the ESA1-RPD3 motif element. The residue at position 279 (Lys-279) is an N6-acetyllysine; by autocatalysis. Acetyl-CoA contacts are provided by residues 320–324 (ACILT) and 329–335 (QRHGYGK). The active-site Proton donor/acceptor is the Glu-355. An acetyl-CoA-binding site is contributed by Ser-359.

It belongs to the MYST (SAS/MOZ) family. Component of the NuA4 histone acetyltransferase complex. Interacts with arp4. Post-translationally, autoacetylation at Lys-279 is required for proper function.

It localises to the nucleus. The protein localises to the chromosome. It catalyses the reaction L-lysyl-[histone] + acetyl-CoA = N(6)-acetyl-L-lysyl-[histone] + CoA + H(+). The catalysed reaction is L-lysyl-[protein] + acetyl-CoA = N(6)-acetyl-L-lysyl-[protein] + CoA + H(+). The enzyme catalyses 2-hydroxyisobutanoyl-CoA + L-lysyl-[protein] = N(6)-(2-hydroxyisobutanoyl)-L-lysyl-[protein] + CoA + H(+). It carries out the reaction (2E)-butenoyl-CoA + L-lysyl-[protein] = N(6)-(2E)-butenoyl-L-lysyl-[protein] + CoA + H(+). Its function is as follows. Catalytic component of the NuA4 histone acetyltransferase (HAT) complex which is involved in epigenetic transcriptional activation of selected genes principally by acetylation of nucleosomal histones H4, H3, H2B, H2A and H2A variant H2A.Z. Acetylates histone H4 to form H4K5ac, H4K8ac, H4K12ac and H4K16ac, histone H3 to form H3K14ac, and histone H2A to form H2AK4ac and H2AK7ac. The NuA4 complex is involved in the DNA damage response and is required for chromosome segregation. The NuA4 complex plays a direct role in repair of DNA double-strand breaks (DSBs) through homologous recombination. Recruitment to promoters depends on H3K4me. Also acetylates non-histone proteins. In addition to protein acetyltransferase, can use different acyl-CoA substrates, such as 2-hydroxyisobutanoyl-CoA (2-hydroxyisobutyryl-CoA) or (2E)-butenoyl-CoA (crotonyl-CoA), and is able to mediate protein 2-hydroxyisobutyrylation and crotonylation, respectively. This Schizosaccharomyces pombe (strain 972 / ATCC 24843) (Fission yeast) protein is Histone acetyltransferase mst1.